The sequence spans 186 residues: Ribosome-recycling factor (186 aa).

Belongs to the RRF family.

It localises to the cytoplasm. In terms of biological role, responsible for the release of ribosomes from messenger RNA at the termination of protein biosynthesis. May increase the efficiency of translation by recycling ribosomes from one round of translation to another. This chain is Ribosome-recycling factor, found in Bartonella bacilliformis (strain ATCC 35685 / KC583 / Herrer 020/F12,63).